A 350-amino-acid chain; its full sequence is MDTGFADSNNDSSPGEGSKRGNSGIEGPVPMDVELAAAKSKRLSEPFFLKNVLLEKSGDTSDLTALALSVHAVMLESGFVLLDHGSDKFSFSKKLLSVSLRYTLPELITRKDTNTVESVTVRFQNIGPRLVVYGTLGGSCKRVHMTSLDKSRFLPVIDLVVDTLKFEKQGSSSYYREVFMLWRMVKDELVIPLLIGLCDKAGLESPPCLMLLPTELKLKILELLPGVSIGYMACVCTEMRYLASDNDLWEHKCLEEGKGCLWKLYTGDVDWKRKFASFWRRKRLDLLARRNPPIKKSNPRFPTLFPDRRDRREPFDRFGPSDFYRFGLRDPRDRFGPRDPRDPHFYGFRY.

A compositionally biased stretch (polar residues) spans 1-15; sequence MDTGFADSNNDSSPG. The disordered stretch occupies residues 1 to 29; it reads MDTGFADSNNDSSPGEGSKRGNSGIEGPV. Residues 206-252 enclose the F-box domain; sequence PPCLMLLPTELKLKILELLPGVSIGYMACVCTEMRYLASDNDLWEHK.

The chain is Putative F-box protein At1g23770 from Arabidopsis thaliana (Mouse-ear cress).